The chain runs to 713 residues: Topoisomerase subunit TopoM (713 aa).

The 464-residue stretch at 41–504 (IPSAYDGLKP…DATPVSRGDE (464 aa)) folds into the Topo IIA-type catalytic domain. Tyr128 acts as the O-(5'-phospho-DNA)-tyrosine intermediate in catalysis. The interval 694–713 (NRAKASIKGSGADVTPAPAE) is disordered.

The protein belongs to the type II topoisomerase GyrA/ParC subunit family. A complex of TopoN and TopoM, possibly a heterotetramer. Mg(2+) is required as a cofactor.

It carries out the reaction ATP-dependent breakage, passage and rejoining of double-stranded DNA.. Its activity is regulated as follows. Inhibited by quinolone antibiotic ciprofloxacin and coumarin antibiotic novobiocin, but at much higher concentrations than is usual for DNA gyrase/topoisomerase. Functionally, catalyzes the relaxation of negatively supercoiled DNA in the presence of ATP or dATP but not other nucleotides. Individual subunits have no activity. Not able to negatively supercoil DNA, it can however introduce positive supercoils in DNA. Relaxes positive supercoils in an ATP-dependent manner. Catenates and decatenates DNA. Generates dsDNA breaks in the presence of the quinolone antibiotic ciprofloxacin, showing it is a topoisomerase. The protein is Topoisomerase subunit TopoM of Mycolicibacterium smegmatis (strain ATCC 700084 / mc(2)155) (Mycobacterium smegmatis).